Reading from the N-terminus, the 271-residue chain is Ribosomal RNA small subunit methyltransferase A (271 aa).

N28, L30, G54, E75, D99, and N117 together coordinate S-adenosyl-L-methionine.

This sequence belongs to the class I-like SAM-binding methyltransferase superfamily. rRNA adenine N(6)-methyltransferase family. RsmA subfamily.

The protein resides in the cytoplasm. The catalysed reaction is adenosine(1518)/adenosine(1519) in 16S rRNA + 4 S-adenosyl-L-methionine = N(6)-dimethyladenosine(1518)/N(6)-dimethyladenosine(1519) in 16S rRNA + 4 S-adenosyl-L-homocysteine + 4 H(+). In terms of biological role, specifically dimethylates two adjacent adenosines (A1518 and A1519) in the loop of a conserved hairpin near the 3'-end of 16S rRNA in the 30S particle. May play a critical role in biogenesis of 30S subunits. The polypeptide is Ribosomal RNA small subunit methyltransferase A (Thermus thermophilus (strain ATCC BAA-163 / DSM 7039 / HB27)).